The primary structure comprises 501 residues: Aspartate--tRNA ligase, cytoplasmic (501 aa).

At Thr-52 the chain carries Phosphothreonine. Lys-74 carries the post-translational modification N6-acetyllysine. Residue Glu-229 participates in L-aspartate binding. Ser-249 carries the phosphoserine modification. Residues Gln-251 to Lys-254 are aspartate. L-aspartate is bound at residue Arg-273. ATP-binding positions include Arg-273–Glu-275 and Arg-281–Leu-283. N6-acetyllysine is present on Lys-374. The interval Lys-411 to Ser-415 is binding site for the 3'-end of tRNA. ATP is bound at residue Glu-424. 2 residues coordinate L-aspartate: Ser-427 and Arg-431. Gly-472–Arg-475 serves as a coordination point for ATP. Thr-500 is modified (phosphothreonine; by PKA).

Belongs to the class-II aminoacyl-tRNA synthetase family. Type 2 subfamily. As to quaternary structure, homodimer. Part of a multisubunit complex that groups tRNA ligases for Arg (RARS1), Asp (DARS1), Gln (QARS1), Ile (IARS1), Leu (LARS1), Lys (KARS1), Met (MARS1) the bifunctional ligase for Glu and Pro (EPRS1) and the auxiliary subunits AIMP1/p43, AIMP2/p38 and EEF1E1/p18.

Its subcellular location is the cytoplasm. It catalyses the reaction tRNA(Asp) + L-aspartate + ATP = L-aspartyl-tRNA(Asp) + AMP + diphosphate. In terms of biological role, catalyzes the specific attachment of an amino acid to its cognate tRNA in a 2 step reaction: the amino acid (AA) is first activated by ATP to form AA-AMP and then transferred to the acceptor end of the tRNA. This chain is Aspartate--tRNA ligase, cytoplasmic (DARS1), found in Bos taurus (Bovine).